A 301-amino-acid chain; its full sequence is Probable alpha-L-glutamate ligase 1 (301 aa).

The 184-residue stretch at 104–287 (LQLLSRKGIG…VTEPIVEYIE (184 aa)) folds into the ATP-grasp domain. ATP-binding positions include Lys-141, 178 to 179 (EY), Asp-187, and 211 to 213 (RSN). Residues Asp-248, Glu-260, and Asn-262 each coordinate Mg(2+). 3 residues coordinate Mn(2+): Asp-248, Glu-260, and Asn-262.

It belongs to the RimK family. It depends on Mg(2+) as a cofactor. Mn(2+) serves as cofactor.

This Shewanella baltica (strain OS155 / ATCC BAA-1091) protein is Probable alpha-L-glutamate ligase 1.